A 313-amino-acid chain; its full sequence is Ribonuclease HIII (313 aa).

The 216-residue stretch at tyrosine 98–lysine 313 folds into the RNase H type-2 domain. Positions 104, 105, and 208 each coordinate a divalent metal cation.

The protein belongs to the RNase HII family. RnhC subfamily. Mn(2+) serves as cofactor. Mg(2+) is required as a cofactor.

The protein localises to the cytoplasm. It catalyses the reaction Endonucleolytic cleavage to 5'-phosphomonoester.. Its function is as follows. Endonuclease that specifically degrades the RNA of RNA-DNA hybrids. The protein is Ribonuclease HIII of Macrococcus caseolyticus (strain JCSC5402) (Macrococcoides caseolyticum).